Reading from the N-terminus, the 388-residue chain is GTPase Obg (388 aa).

The 159-residue stretch at 1-159 (MKFVDEATIR…RSLRLELMLL (159 aa)) folds into the Obg domain. The region spanning 160 to 333 (ADVGLLGMPN…LALKLLDFID (174 aa)) is the OBG-type G domain. GTP-binding positions include 166–173 (GMPNAGKS), 191–195 (FTTLV), 213–216 (DIPG), 283–286 (NKAD), and 314–316 (SAY). Mg(2+) is bound by residues Ser173 and Thr193. The segment at 356-377 (QNANESVNEDYDDDLDDDDYDD) is disordered. Residues 362–377 (VNEDYDDDLDDDDYDD) show a composition bias toward acidic residues.

It belongs to the TRAFAC class OBG-HflX-like GTPase superfamily. OBG GTPase family. As to quaternary structure, monomer. It depends on Mg(2+) as a cofactor.

It localises to the cytoplasm. In terms of biological role, an essential GTPase which binds GTP, GDP and possibly (p)ppGpp with moderate affinity, with high nucleotide exchange rates and a fairly low GTP hydrolysis rate. Plays a role in control of the cell cycle, stress response, ribosome biogenesis and in those bacteria that undergo differentiation, in morphogenesis control. This is GTPase Obg from Shewanella piezotolerans (strain WP3 / JCM 13877).